A 435-amino-acid polypeptide reads, in one-letter code: Histone acetyltransferase ESA1 (435 aa).

In terms of domain architecture, Tudor-knot spans 22 to 73; sequence IIGCKCWVEKDGEQRLAEILSINNRRQPPKFYVHYEDFNKRLDEWILASRIN. Residues 78-89 show a composition bias toward basic and acidic residues; it reads VTFPKPRDPDEK. Residues 78 to 108 are disordered; it reads VTFPKPRDPDEKKKKKQKKSATPQATDGETL. In terms of domain architecture, MYST-type HAT spans 152 to 423; sequence SRVRNLSKII…IDPEKLIWKP (272 aa). The segment at 185 to 210 adopts a C2HC MYST-type; degenerate zinc-finger fold; that stretch reads VYIDDFSLQYFGSKKQYARYRQKCTL. Positions 235–256 match the ESA1-RPD3 motif motif; sequence RTWCRNLCLLSKLFLDHKTLYY. An N6-acetyllysine; by autocatalysis modification is found at Lys-252. Acetyl-CoA is bound by residues 293-297 and 302-308; these read ACILT and QRMGYGR. Glu-328 (proton donor/acceptor) is an active-site residue. Ser-332 is a binding site for acetyl-CoA.

It belongs to the MYST (SAS/MOZ) family. Component of the NuA4 histone acetyltransferase complex. Interacts with arp4. Autoacetylation at Lys-252 is required for proper function.

It is found in the nucleus. Its subcellular location is the chromosome. It carries out the reaction L-lysyl-[histone] + acetyl-CoA = N(6)-acetyl-L-lysyl-[histone] + CoA + H(+). The catalysed reaction is L-lysyl-[protein] + acetyl-CoA = N(6)-acetyl-L-lysyl-[protein] + CoA + H(+). The enzyme catalyses 2-hydroxyisobutanoyl-CoA + L-lysyl-[protein] = N(6)-(2-hydroxyisobutanoyl)-L-lysyl-[protein] + CoA + H(+). It catalyses the reaction (2E)-butenoyl-CoA + L-lysyl-[protein] = N(6)-(2E)-butenoyl-L-lysyl-[protein] + CoA + H(+). Functionally, catalytic component of the NuA4 histone acetyltransferase (HAT) complex which is involved in epigenetic transcriptional activation of selected genes principally by acetylation of nucleosomal histones H4, H3, H2B, H2A and H2A variant H2A.Z. Acetylates histone H4 to form H4K5ac, H4K8ac, H4K12ac and H4K16ac, histone H3 to form H3K14ac, and histone H2A to form H2AK4ac and H2AK7ac. The NuA4 complex is involved in the DNA damage response and is required for chromosome segregation. The NuA4 complex plays a direct role in repair of DNA double-strand breaks (DSBs) through homologous recombination. Recruitment to promoters depends on H3K4me. Also acetylates non-histone proteins. In addition to protein acetyltransferase, can use different acyl-CoA substrates, such as 2-hydroxyisobutanoyl-CoA (2-hydroxyisobutyryl-CoA) or (2E)-butenoyl-CoA (crotonyl-CoA), and is able to mediate protein 2-hydroxyisobutyrylation and crotonylation, respectively. In Eremothecium gossypii (strain ATCC 10895 / CBS 109.51 / FGSC 9923 / NRRL Y-1056) (Yeast), this protein is Histone acetyltransferase ESA1 (ESA1).